We begin with the raw amino-acid sequence, 203 residues long: MHTGEKPYTCEECVKLLTNPQALLYTGAFILNKNFTNVKNAAKPLLNPHPLINKRIHTGEKPYTCEECGKAFYRSSHLTEHKNIHTGEKSYKCEECGNAFYRSSHLTKHKRIHSGQKPYKCEECGKAFRQSSALNEHKKIHTAEKPYKCKECGKAFRWSRSLNEHTNIHIGEKPYTCEECGKDFTWSSTLTVHQRIQTGEKHS.

4 consecutive C2H2-type zinc fingers follow at residues 63-85 (YTCEECGKAFYRSSHLTEHKNIH), 91-113 (YKCEECGNAFYRSSHLTKHKRIH), 119-141 (YKCEECGKAFRQSSALNEHKKIH), and 147-169 (YKCKECGKAFRWSRSLNEHTNIH). A C2H2-type 5; degenerate zinc finger spans residues 175 to 197 (YTCEECGKDFTWSSTLTVHQRIQ).

The protein belongs to the krueppel C2H2-type zinc-finger protein family.

It is found in the nucleus. May be involved in transcriptional regulation. The polypeptide is Putative zinc finger protein 876 (ZNF876P) (Homo sapiens (Human)).